The primary structure comprises 380 residues: Flap endonuclease 1 (380 aa).

Residues 1–105 form an N-domain region; it reads MGIKGLAQVL…GELAKRVARH (105 aa). Asp34 contacts Mg(2+). Residues Arg47 and Arg71 each contribute to the DNA site. Positions 87, 159, 161, 180, and 182 each coordinate Mg(2+). An I-domain region spans residues 123 to 254; sequence MVDRFAKRTV…ARAVELIRQY (132 aa). Residue Glu159 participates in DNA binding. DNA-binding residues include Gly232 and Asp234. Asp234 provides a ligand contact to Mg(2+). Positions 337 to 345 are interaction with PCNA; that stretch reads PQGRLDSFF. Positions 340 to 380 are disordered; sequence RLDSFFKPVPSSPKKPVDTKSKGSAKRKRDSNKGGESKKKR. The segment covering 342–353 has biased composition (low complexity); it reads DSFFKPVPSSPK. Residues Ser350 and Ser351 each carry the phosphoserine modification. Over residues 370-380 the composition is skewed to basic and acidic residues; the sequence is SNKGGESKKKR.

Belongs to the XPG/RAD2 endonuclease family. FEN1 subfamily. Interacts with PCNA. Three molecules of rad2 bind to one PCNA trimer with each molecule binding to one PCNA monomer. PCNA stimulates the nuclease activity without altering cleavage specificity. Requires Mg(2+) as cofactor. Post-translationally, phosphorylated. Phosphorylation upon DNA damage induces relocalization to the nuclear plasma.

It localises to the nucleus. The protein resides in the nucleolus. Its subcellular location is the nucleoplasm. It is found in the mitochondrion. In terms of biological role, structure-specific nuclease with 5'-flap endonuclease and 5'-3' exonuclease activities involved in DNA replication and repair. During DNA replication, cleaves the 5'-overhanging flap structure that is generated by displacement synthesis when DNA polymerase encounters the 5'-end of a downstream Okazaki fragment. It enters the flap from the 5'-end and then tracks to cleave the flap base, leaving a nick for ligation. Also involved in the long patch base excision repair (LP-BER) pathway, by cleaving within the apurinic/apyrimidinic (AP) site-terminated flap. Acts as a genome stabilization factor that prevents flaps from equilibrating into structures that lead to duplications and deletions. Also possesses 5'-3' exonuclease activity on nicked or gapped double-stranded DNA, and exhibits RNase H activity. Also involved in replication and repair of rDNA and in repairing mitochondrial DNA. In Schizosaccharomyces pombe (strain 972 / ATCC 24843) (Fission yeast), this protein is Flap endonuclease 1.